Reading from the N-terminus, the 275-residue chain is NH(3)-dependent NAD(+) synthetase (275 aa).

47-54 (GMSGGQDS) is an ATP binding site. Asp-53 lines the Mg(2+) pocket. Arg-141 is a deamido-NAD(+) binding site. Thr-161 is a binding site for ATP. A Mg(2+)-binding site is contributed by Glu-166. Positions 174 and 181 each coordinate deamido-NAD(+). Lys-190 and Thr-212 together coordinate ATP. 261–262 (HK) contacts deamido-NAD(+).

Belongs to the NAD synthetase family. Homodimer.

The enzyme catalyses deamido-NAD(+) + NH4(+) + ATP = AMP + diphosphate + NAD(+) + H(+). It participates in cofactor biosynthesis; NAD(+) biosynthesis; NAD(+) from deamido-NAD(+) (ammonia route): step 1/1. In terms of biological role, catalyzes the ATP-dependent amidation of deamido-NAD to form NAD. Uses ammonia as a nitrogen source. This Oceanobacillus iheyensis (strain DSM 14371 / CIP 107618 / JCM 11309 / KCTC 3954 / HTE831) protein is NH(3)-dependent NAD(+) synthetase.